The chain runs to 869 residues: Dimethylglycine dehydrogenase, mitochondrial (869 aa).

Residues 1-43 (MLRPGALRLRGLALRGSPRRPSSAGLREGQESPASPPEWKDRA) constitute a mitochondrion transit peptide. Positions 14 to 39 (LRGSPRRPSSAGLREGQESPASPPEW) are disordered. FAD is bound by residues 52–53 (CV), 73–74 (EK), and 80–88 (GSTWHAAGL). Histidine 84 is subject to Tele-8alpha-FAD histidine. Position 107 is an N6-acetyllysine (lysine 107). N6-acetyllysine; alternate is present on lysine 141. Lysine 141 bears the N6-succinyllysine; alternate mark. Lysine 161 is modified (N6-acetyllysine). Valine 212 lines the FAD pocket. Lysine 216 is modified (N6-acetyllysine). An FAD-binding site is contributed by tryptophan 244. Residues lysine 310 and lysine 312 each carry the N6-succinyllysine modification. N6-acetyllysine is present on residues lysine 328 and lysine 353. Position 390-395 (390-395 (FGYGII)) interacts with FAD. N6-acetyllysine; alternate is present on residues lysine 427, lysine 469, and lysine 516. N6-succinyllysine; alternate occurs at positions 427, 469, and 516. Residue 573–575 (ELT) coordinates (6S)-5,6,7,8-tetrahydrofolate. Lysine 648 carries the post-translational modification N6-acetyllysine; alternate. At lysine 648 the chain carries N6-succinyllysine; alternate. (6S)-5,6,7,8-tetrahydrofolate contacts are provided by residues tyrosine 669, 676–678 (ELY), and tyrosine 737. Lysine 757 carries the post-translational modification N6-acetyllysine. Lysine 786 bears the N6-acetyllysine; alternate mark. At lysine 786 the chain carries N6-succinyllysine; alternate. Lysine 788 carries the post-translational modification N6-succinyllysine.

The protein belongs to the GcvT family. FAD serves as cofactor.

Its subcellular location is the mitochondrion. It catalyses the reaction (6S)-5,6,7,8-tetrahydrofolyl-(gamma-L-Glu)(n) + N,N-dimethylglycine + oxidized [electron-transfer flavoprotein] + H(+) = (6R)-5,10-methylenetetrahydrofolyl-(gamma-L-Glu)(n) + sarcosine + reduced [electron-transfer flavoprotein]. Its pathway is amine and polyamine degradation; betaine degradation; sarcosine from betaine: step 2/2. Catalyzes the demethylation of N,N-dimethylglycine to sarcosine. Also has activity with sarcosine in vitro. The protein is Dimethylglycine dehydrogenase, mitochondrial (Dmgdh) of Mus musculus (Mouse).